The sequence spans 280 residues: MKYFEFTFDTHPCTETVNDVLAAVLGEAGFESFVEREGGLTAYIQQSLYNEETLKTELANFPVPDTEISYTFAEAEDKDWNEEWEKNFFQPIVIGDRCVIHSTFHQDVPKAEYDILINPQMAFGTGHHETTSLIIGELLDSELTGKSLLDMGCGTSILAILARMRGAKPCTAIDIDEWCVRNSIENIELNGVTDIAVSQGDASALQGKGPFDVVIANINRNILLNDMKQYVACMHPGSELFMSGFYIDDIPAIRREAEKHGLTFVHHQEKNRWAAVKFVL.

Residues T131, G152, D174, and N217 each contribute to the S-adenosyl-L-methionine site.

The protein belongs to the methyltransferase superfamily. PrmA family.

Its subcellular location is the cytoplasm. It carries out the reaction L-lysyl-[protein] + 3 S-adenosyl-L-methionine = N(6),N(6),N(6)-trimethyl-L-lysyl-[protein] + 3 S-adenosyl-L-homocysteine + 3 H(+). In terms of biological role, methylates ribosomal protein L11. This Bacteroides fragilis (strain ATCC 25285 / DSM 2151 / CCUG 4856 / JCM 11019 / LMG 10263 / NCTC 9343 / Onslow / VPI 2553 / EN-2) protein is Ribosomal protein L11 methyltransferase.